We begin with the raw amino-acid sequence, 476 residues long: Aspartyl/glutamyl-tRNA(Asn/Gln) amidotransferase subunit B (476 aa).

The protein belongs to the GatB/GatE family. GatB subfamily. As to quaternary structure, heterotrimer of A, B and C subunits.

It carries out the reaction L-glutamyl-tRNA(Gln) + L-glutamine + ATP + H2O = L-glutaminyl-tRNA(Gln) + L-glutamate + ADP + phosphate + H(+). It catalyses the reaction L-aspartyl-tRNA(Asn) + L-glutamine + ATP + H2O = L-asparaginyl-tRNA(Asn) + L-glutamate + ADP + phosphate + 2 H(+). In terms of biological role, allows the formation of correctly charged Asn-tRNA(Asn) or Gln-tRNA(Gln) through the transamidation of misacylated Asp-tRNA(Asn) or Glu-tRNA(Gln) in organisms which lack either or both of asparaginyl-tRNA or glutaminyl-tRNA synthetases. The reaction takes place in the presence of glutamine and ATP through an activated phospho-Asp-tRNA(Asn) or phospho-Glu-tRNA(Gln). This chain is Aspartyl/glutamyl-tRNA(Asn/Gln) amidotransferase subunit B, found in Clostridium botulinum (strain Okra / Type B1).